Here is a 163-residue protein sequence, read N- to C-terminus: Large ribosomal subunit protein uL15 (163 aa).

Residues 27–37 (SGLGKTAGRGQ) show a composition bias toward gly residues. The interval 27 to 46 (SGLGKTAGRGQKGQKSRSGV) is disordered.

It belongs to the universal ribosomal protein uL15 family. As to quaternary structure, part of the 50S ribosomal subunit.

In terms of biological role, binds to the 23S rRNA. In Zymomonas mobilis subsp. mobilis (strain ATCC 31821 / ZM4 / CP4), this protein is Large ribosomal subunit protein uL15.